A 205-amino-acid chain; its full sequence is Fe/S biogenesis protein NfuA (205 aa).

Cysteine 162 and cysteine 165 together coordinate [4Fe-4S] cluster.

The protein belongs to the NfuA family. As to quaternary structure, homodimer. Requires [4Fe-4S] cluster as cofactor.

Its function is as follows. Involved in iron-sulfur cluster biogenesis. Binds a 4Fe-4S cluster, can transfer this cluster to apoproteins, and thereby intervenes in the maturation of Fe/S proteins. Could also act as a scaffold/chaperone for damaged Fe/S proteins. The polypeptide is Fe/S biogenesis protein NfuA (Blochmanniella floridana).